We begin with the raw amino-acid sequence, 259 residues long: Probable UMP-CMP kinase 2 (259 aa).

63 to 68 (GSGKGT) contributes to the ATP binding site. The tract at residues 83-112 (SAGDLLRREIAMHTENGAMILNLIKDGKIV) is NMP. Residues Arg89, 110–112 (KIV), and 137–140 (GFPR) contribute to the a ribonucleoside 5'-phosphate site. Residue Asn144 participates in CMP binding. Residues 175 to 183 (NRNQGRIDD) form an LID region. Arg176 is an ATP binding site. A ribonucleoside 5'-phosphate contacts are provided by Arg180 and Arg191. Gly219 is a binding site for ATP.

The protein belongs to the adenylate kinase family. UMP-CMP kinase subfamily. Monomer. Mg(2+) is required as a cofactor.

The protein resides in the cytoplasm. It localises to the nucleus. It catalyses the reaction CMP + ATP = CDP + ADP. The catalysed reaction is dCMP + ATP = dCDP + ADP. The enzyme catalyses UMP + ATP = UDP + ADP. Catalyzes the phosphorylation of pyrimidine nucleoside monophosphates at the expense of ATP. Plays an important role in de novo pyrimidine nucleotide biosynthesis. Has preference for UMP and CMP as phosphate acceptors. The chain is Probable UMP-CMP kinase 2 (UMK2) from Arabidopsis thaliana (Mouse-ear cress).